A 124-amino-acid chain; its full sequence is Putative transmembrane protein FLJ36131 (124 aa).

Residues 1–2 lie on the Cytoplasmic side of the membrane; the sequence is MY. Residues 3–23 traverse the membrane as a helical segment; the sequence is VSISFLLGLSHLVLCCLLTFI. Residues 24 to 124 lie on the Extracellular side of the membrane; it reads VNFYLPPESI…LLTTTSYSVS (101 aa). Asparagine 41 is a glycosylation site (N-linked (GlcNAc...) asparagine).

It is found in the membrane. This chain is Putative transmembrane protein FLJ36131, found in Homo sapiens (Human).